Reading from the N-terminus, the 654-residue chain is Peptide-N(4)-(N-acetyl-beta-glucosaminyl)asparagine amidase (654 aa).

Ala-2 is modified (N-acetylalanine). Positions 30–91 (EASKLLLTYA…EGETHLIFPK (62 aa)) constitute a PUB domain. The span at 112 to 123 (RLDGSNKSHKVE) shows a compositional bias: basic and acidic residues. The tract at residues 112 to 167 (RLDGSNKSHKVESSQQPAASTQLPTTPSSNPSGLNQHTRNRQGQSPDPPSASTVTP) is disordered. Residues 124–167 (SSQQPAASTQLPTTPSSNPSGLNQHTRNRQGQSPDPPSASTVTP) show a composition bias toward polar residues. At Thr-137 the chain carries Phosphothreonine. 4 residues coordinate Zn(2+): Cys-250, Cys-253, Cys-283, and Cys-286. Residue Cys-309 is the Nucleophile of the active site. Residues His-336 and Asp-353 contribute to the active site. The PAW domain maps to 454 to 654 (ELGGRISGSV…LEIIIKFSDL (201 aa)).

The protein belongs to the transglutaminase-like superfamily. PNGase family. As to quaternary structure, component of a complex required to couple retrotranslocation, ubiquitination and deglycosylation composed of NGLY1, SAKS1, AMFR, VCP and RAD23B. Interacts with the proteasome components RAD23B and PSMC1. Interacts with directly with VCP. Interacts with DERL1, bringing it close to the endoplasmic reticulum membrane. Interacts with SAKS1. Zn(2+) serves as cofactor.

The protein localises to the cytoplasm. It catalyses the reaction Hydrolysis of an N(4)-(acetyl-beta-D-glucosaminyl)asparagine residue in which the glucosamine residue may be further glycosylated, to yield a (substituted) N-acetyl-beta-D-glucosaminylamine and a peptide containing an aspartate residue.. Inhibited by Z-VAD-fmk, a well-known caspase inhibitor, which inhibits enzyme activity through covalent binding of the carbohydrate to the single Cys-306 residue. In terms of biological role, specifically deglycosylates the denatured form of N-linked glycoproteins in the cytoplasm and assists their proteasome-mediated degradation. Cleaves the beta-aspartyl-glucosamine (GlcNAc) of the glycan and the amide side chain of Asn, converting Asn to Asp. Prefers proteins containing high-mannose over those bearing complex type oligosaccharides. Can recognize misfolded proteins in the endoplasmic reticulum that are exported to the cytosol to be destroyed and deglycosylate them, while it has no activity toward native proteins. Deglycosylation is a prerequisite for subsequent proteasome-mediated degradation of some, but not all, misfolded glycoproteins. The polypeptide is Peptide-N(4)-(N-acetyl-beta-glucosaminyl)asparagine amidase (NGLY1) (Macaca fascicularis (Crab-eating macaque)).